A 427-amino-acid chain; its full sequence is Four-jointed box protein 1 (427 aa).

Positions 1-18 (MRALSANLFAVLLMCALA) are cleaved as a signal peptide. N-linked (GlcNAc...) asparagine glycans are attached at residues Asn81, Asn244, and Asn270.

The protein localises to the secreted. May act as an inhibitor of dendrite extension and branching. The polypeptide is Four-jointed box protein 1 (fjx1) (Xiphophorus maculatus (Southern platyfish)).